The primary structure comprises 126 residues: Holo-[acyl-carrier-protein] synthase (126 aa).

Mg(2+) is bound by residues Asp-9 and Glu-58.

This sequence belongs to the P-Pant transferase superfamily. AcpS family. It depends on Mg(2+) as a cofactor.

Its subcellular location is the cytoplasm. The enzyme catalyses apo-[ACP] + CoA = holo-[ACP] + adenosine 3',5'-bisphosphate + H(+). In terms of biological role, transfers the 4'-phosphopantetheine moiety from coenzyme A to a Ser of acyl-carrier-protein. The chain is Holo-[acyl-carrier-protein] synthase from Buchnera aphidicola subsp. Cinara cedri (strain Cc).